Here is a 371-residue protein sequence, read N- to C-terminus: Lysine racemase (371 aa).

Lys-39 acts as the Proton acceptor in catalysis. Lys-39 carries the N6-(pyridoxal phosphate)lysine modification. Residue Arg-135 coordinates substrate. Catalysis depends on Tyr-266, which acts as the Proton acceptor. Residue Met-313 coordinates substrate.

Belongs to the alanine racemase family. As to quaternary structure, homodimer. It depends on pyridoxal 5'-phosphate as a cofactor.

It carries out the reaction L-lysine = D-lysine. In terms of biological role, catalyzes the interconversion of D-lysine and L-lysine. Can also use arginine and ornithine, but not alanine. This chain is Lysine racemase, found in Oenococcus oeni (strain ATCC BAA-331 / PSU-1).